The following is a 176-amino-acid chain: NAD(P)H-quinone oxidoreductase subunit 6, chloroplastic (176 aa).

5 helical membrane-spanning segments follow: residues 10-30 (FLLV…VLLP), 32-52 (PIYS…FYIL), 61-81 (AQLL…VMFM), 92-112 (LWTV…ISLI), and 152-172 (FFLP…GAIA).

It belongs to the complex I subunit 6 family. NDH is composed of at least 16 different subunits, 5 of which are encoded in the nucleus.

The protein resides in the plastid. Its subcellular location is the chloroplast thylakoid membrane. The catalysed reaction is a plastoquinone + NADH + (n+1) H(+)(in) = a plastoquinol + NAD(+) + n H(+)(out). It catalyses the reaction a plastoquinone + NADPH + (n+1) H(+)(in) = a plastoquinol + NADP(+) + n H(+)(out). NDH shuttles electrons from NAD(P)H:plastoquinone, via FMN and iron-sulfur (Fe-S) centers, to quinones in the photosynthetic chain and possibly in a chloroplast respiratory chain. The immediate electron acceptor for the enzyme in this species is believed to be plastoquinone. Couples the redox reaction to proton translocation, and thus conserves the redox energy in a proton gradient. The sequence is that of NAD(P)H-quinone oxidoreductase subunit 6, chloroplastic (ndhG) from Atropa belladonna (Belladonna).